The primary structure comprises 222 residues: Cytidylate kinase (222 aa).

9 to 17 (GPSGAGKST) is an ATP binding site.

This sequence belongs to the cytidylate kinase family. Type 1 subfamily.

The protein localises to the cytoplasm. It catalyses the reaction CMP + ATP = CDP + ADP. The enzyme catalyses dCMP + ATP = dCDP + ADP. The polypeptide is Cytidylate kinase (Thermodesulfovibrio yellowstonii (strain ATCC 51303 / DSM 11347 / YP87)).